The following is a 254-amino-acid chain: tRNA pseudouridine synthase A (254 aa).

Catalysis depends on D52, which acts as the Nucleophile. Y111 lines the substrate pocket.

This sequence belongs to the tRNA pseudouridine synthase TruA family. As to quaternary structure, homodimer.

The catalysed reaction is uridine(38/39/40) in tRNA = pseudouridine(38/39/40) in tRNA. Its function is as follows. Formation of pseudouridine at positions 38, 39 and 40 in the anticodon stem and loop of transfer RNAs. The chain is tRNA pseudouridine synthase A from Rhizorhabdus wittichii (strain DSM 6014 / CCUG 31198 / JCM 15750 / NBRC 105917 / EY 4224 / RW1) (Sphingomonas wittichii).